The primary structure comprises 260 residues: Ribonuclease 3 (260 aa).

Positions 16–145 constitute an RNase III domain; sequence VQLLESRLGL…VFGAVFLTSG (130 aa). Residue Glu58 coordinates Mg(2+). Asp62 is an active-site residue. Asp131 and Glu134 together coordinate Mg(2+). Glu134 is an active-site residue. The 70-residue stretch at 172 to 241 folds into the DRBM domain; it reads DYKTLLQEMA…AQATLEKLRE (70 aa). Residues 219–260 form a disordered region; it reads ATGRSKKEAEQSAAQATLEKLREDAACPTSPPPGTPRHDTPA.

This sequence belongs to the ribonuclease III family. In terms of assembly, homodimer. Requires Mg(2+) as cofactor.

The protein resides in the cytoplasm. It carries out the reaction Endonucleolytic cleavage to 5'-phosphomonoester.. Its function is as follows. Digests double-stranded RNA. Involved in the processing of primary rRNA transcript to yield the immediate precursors to the large and small rRNAs (23S and 16S). Processes some mRNAs, and tRNAs when they are encoded in the rRNA operon. Processes pre-crRNA and tracrRNA of type II CRISPR loci if present in the organism. The chain is Ribonuclease 3 from Myxococcus xanthus (strain DK1622).